Here is a 393-residue protein sequence, read N- to C-terminus: 2-nitroimidazole transporter (393 aa).

The Cytoplasmic segment spans residues 1–12 (MTCSTSLSGKNR). Residues 13–33 (IVLIAGILMIATTLRVTFTGA) traverse the membrane as a helical segment. Residues 34-52 (APLLDTIRSAYSLTTAQTG) are Periplasmic-facing. The chain crosses the membrane as a helical span at residues 53 to 73 (LLTTLPLLAFALISPLAAPVA). At 74–80 (RRFGMER) the chain is on the cytoplasmic side. 2 consecutive transmembrane segments (helical) span residues 81 to 101 (SLFAALLLICAGIAIRSLPSP) and 102 to 122 (YLLFGGTAVIGGGIALGNVLL). Over 123 to 140 (PGLIKRDFPHSVARLTGA) the chain is Cytoplasmic. The helical transmembrane segment at 141-161 (YSLTMGAAAALGSAMVVPLAL) threads the bilayer. The Periplasmic segment spans residues 162–163 (NG). The chain crosses the membrane as a helical span at residues 164–184 (FGWQGALLMLMCFPLLALFLW). Topologically, residues 185-218 (LPQWRSQQHANLSTSRALHTRGIWRSPLAWQVTL) are cytoplasmic. A helical membrane pass occupies residues 219–239 (FLGINSLVYYVIIGWLPAILI). Over 240-249 (SHGYSEAQAG) the chain is Periplasmic. Residues 250–270 (SLHGLLQLATAAPGLLIPLFL) traverse the membrane as a helical segment. The Cytoplasmic segment spans residues 271 to 278 (HHVKDQRG). Residues 279 to 299 (IAAFVALMCAVGAVGLCFMPA) form a helical membrane-spanning segment. Over 300 to 304 (HAITW) the chain is Periplasmic. The helical transmembrane segment at 305 to 325 (TLLFGFGSGATMILGLTFIGL) threads the bilayer. Residues 326–334 (RASSAHQAA) lie on the Cytoplasmic side of the membrane. The chain crosses the membrane as a helical span at residues 335–355 (ALSGMAQSVGYLLAACGPPLM). The Periplasmic segment spans residues 356–366 (GKIHDANGNWS). Residues 367–387 (VPLMGVAILSLLMAIFGLCAG) traverse the membrane as a helical segment. The Cytoplasmic segment spans residues 388 to 393 (RDKEIR).

The protein belongs to the major facilitator superfamily. Cyanate porter (TC 2.A.1.17) family.

Its subcellular location is the cell inner membrane. Involved in efflux of 2-nitroimidazole. The sequence is that of 2-nitroimidazole transporter from Escherichia coli (strain K12).